The chain runs to 471 residues: Glutamate--tRNA ligase (471 aa).

A 'HIGH' region motif is present at residues 9–19 (PSPTGYLHVGG). Cysteine 98, cysteine 100, cysteine 125, and histidine 127 together coordinate Zn(2+). The 'KMSKS' region motif lies at 237–241 (KLSKR). ATP is bound at residue lysine 240.

Belongs to the class-I aminoacyl-tRNA synthetase family. Glutamate--tRNA ligase type 1 subfamily. As to quaternary structure, monomer. It depends on Zn(2+) as a cofactor.

It is found in the cytoplasm. It carries out the reaction tRNA(Glu) + L-glutamate + ATP = L-glutamyl-tRNA(Glu) + AMP + diphosphate. Its function is as follows. Catalyzes the attachment of glutamate to tRNA(Glu) in a two-step reaction: glutamate is first activated by ATP to form Glu-AMP and then transferred to the acceptor end of tRNA(Glu). The protein is Glutamate--tRNA ligase of Shigella boydii serotype 18 (strain CDC 3083-94 / BS512).